The chain runs to 140 residues: Large ribosomal subunit protein uL11 (140 aa).

It belongs to the universal ribosomal protein uL11 family. Part of the ribosomal stalk of the 50S ribosomal subunit. Interacts with L10 and the large rRNA to form the base of the stalk. L10 forms an elongated spine to which L12 dimers bind in a sequential fashion forming a multimeric L10(L12)X complex. In terms of processing, one or more lysine residues are methylated.

Its function is as follows. Forms part of the ribosomal stalk which helps the ribosome interact with GTP-bound translation factors. The polypeptide is Large ribosomal subunit protein uL11 (Brachyspira hyodysenteriae (strain ATCC 49526 / WA1)).